Here is a 431-residue protein sequence, read N- to C-terminus: Serine hydroxymethyltransferase (431 aa).

(6S)-5,6,7,8-tetrahydrofolate is bound by residues L126 and 130-132; that span reads GHL. The residue at position 235 (K235) is an N6-(pyridoxal phosphate)lysine.

It belongs to the SHMT family. In terms of assembly, homodimer. Pyridoxal 5'-phosphate serves as cofactor.

The protein localises to the cytoplasm. It catalyses the reaction (6R)-5,10-methylene-5,6,7,8-tetrahydrofolate + glycine + H2O = (6S)-5,6,7,8-tetrahydrofolate + L-serine. It functions in the pathway one-carbon metabolism; tetrahydrofolate interconversion. Its pathway is amino-acid biosynthesis; glycine biosynthesis; glycine from L-serine: step 1/1. In terms of biological role, catalyzes the reversible interconversion of serine and glycine with tetrahydrofolate (THF) serving as the one-carbon carrier. This reaction serves as the major source of one-carbon groups required for the biosynthesis of purines, thymidylate, methionine, and other important biomolecules. Also exhibits THF-independent aldolase activity toward beta-hydroxyamino acids, producing glycine and aldehydes, via a retro-aldol mechanism. In Nocardia farcinica (strain IFM 10152), this protein is Serine hydroxymethyltransferase.